A 1334-amino-acid polypeptide reads, in one-letter code: DNA-directed RNA polymerase subunit beta' (1334 aa).

Cys-213, Cys-284, Cys-291, and Cys-294 together coordinate Zn(2+). The span at 1299 to 1308 (SSRGSSRFSR) shows a compositional bias: low complexity. Residues 1299–1334 (SSRGSSRFSRQPISDRWSEADEEGEEDDFEEDYEEE) form a disordered region. Acidic residues predominate over residues 1318–1334 (ADEEGEEDDFEEDYEEE).

It belongs to the RNA polymerase beta' chain family. RpoC2 subfamily. As to quaternary structure, in cyanobacteria the RNAP catalytic core is composed of 2 alpha, 1 beta, 1 beta', 1 gamma and 1 omega subunit. When a sigma factor is associated with the core the holoenzyme is formed, which can initiate transcription. Requires Zn(2+) as cofactor.

It catalyses the reaction RNA(n) + a ribonucleoside 5'-triphosphate = RNA(n+1) + diphosphate. Functionally, DNA-dependent RNA polymerase catalyzes the transcription of DNA into RNA using the four ribonucleoside triphosphates as substrates. This is DNA-directed RNA polymerase subunit beta' from Microcystis aeruginosa (strain NIES-843 / IAM M-2473).